A 211-amino-acid polypeptide reads, in one-letter code: Large ribosomal subunit protein uL3 (211 aa).

The protein belongs to the universal ribosomal protein uL3 family. Part of the 50S ribosomal subunit. Forms a cluster with proteins L14 and L19.

One of the primary rRNA binding proteins, it binds directly near the 3'-end of the 23S rRNA, where it nucleates assembly of the 50S subunit. This chain is Large ribosomal subunit protein uL3, found in Desulfatibacillum aliphaticivorans.